A 200-amino-acid polypeptide reads, in one-letter code: Small ribosomal subunit protein uS4c (200 aa).

One can recognise an S4 RNA-binding domain in the interval 90–150 (MRLDNIIFRL…NRKESVIIKN (61 aa)).

The protein belongs to the universal ribosomal protein uS4 family. As to quaternary structure, part of the 30S ribosomal subunit. Contacts protein S5. The interaction surface between S4 and S5 is involved in control of translational fidelity.

It is found in the plastid. The protein localises to the chloroplast. One of the primary rRNA binding proteins, it binds directly to 16S rRNA where it nucleates assembly of the body of the 30S subunit. Functionally, with S5 and S12 plays an important role in translational accuracy. The polypeptide is Small ribosomal subunit protein uS4c (rps4) (Pellia neesiana (Liverwort)).